We begin with the raw amino-acid sequence, 490 residues long: Acetyl-coenzyme A carboxylase carboxyl transferase subunit beta, chloroplastic (490 aa).

The tract at residues 184–203 (LNSSENEGSSRRTRTKGSDL) is disordered. Residues 221 to 490 (LWVQCENCYG…PLNQKSSKIK (270 aa)) form the CoA carboxyltransferase N-terminal domain. The Zn(2+) site is built by Cys-225, Cys-228, Cys-244, and Cys-247. The segment at 225 to 247 (CENCYGLNYKKFLKSKMNICEQC) adopts a C4-type zinc-finger fold.

This sequence belongs to the AccD/PCCB family. In terms of assembly, acetyl-CoA carboxylase is a heterohexamer composed of biotin carboxyl carrier protein, biotin carboxylase and 2 subunits each of ACCase subunit alpha and ACCase plastid-coded subunit beta (accD). Zn(2+) serves as cofactor. As to expression, RNA expressed in leaf, root, stem, and tuber; the least expression occurs in stems. RNA persists even in senescent leaves.

The protein localises to the plastid. It is found in the chloroplast stroma. It catalyses the reaction N(6)-carboxybiotinyl-L-lysyl-[protein] + acetyl-CoA = N(6)-biotinyl-L-lysyl-[protein] + malonyl-CoA. The protein operates within lipid metabolism; malonyl-CoA biosynthesis; malonyl-CoA from acetyl-CoA: step 1/1. Component of the acetyl coenzyme A carboxylase (ACC) complex. Biotin carboxylase (BC) catalyzes the carboxylation of biotin on its carrier protein (BCCP) and then the CO(2) group is transferred by the transcarboxylase to acetyl-CoA to form malonyl-CoA. This chain is Acetyl-coenzyme A carboxylase carboxyl transferase subunit beta, chloroplastic, found in Solanum tuberosum (Potato).